Reading from the N-terminus, the 302-residue chain is Acetylxylan esterase (302 aa).

A signal peptide spans 1-20 (MPSVKETLTLLLSQAFLATG). Positions 21–31 (SPVDGETVVKR) are excised as a propeptide. Position 32 is a pyrrolidone carboxylic acid (glutamine 32). N-linked (GlcNAc...) asparagine glycosylation occurs at asparagine 94. Serine 121 is an active-site residue. Residues 236–273 (QLSSGGSQPPGGGPTSTSRPTSTRTGSSPGPTQTHWGQ) are disordered. Positions 244–266 (PPGGGPTSTSRPTSTRTGSSPGP) are linker. The segment covering 250-269 (TSTSRPTSTRTGSSPGPTQT) has biased composition (low complexity). A CBM1 domain is found at 266–302 (PTQTHWGQCGGQGWTGPTQCESGTTCQVISQWYSQCL). 2 disulfide bridges follow: cysteine 274/cysteine 291 and cysteine 285/cysteine 301.

This sequence belongs to the cutinase family. Acetylxylan esterase subfamily. As to quaternary structure, monomer. Glycosylated.

The protein localises to the secreted. The catalysed reaction is Deacetylation of xylans and xylo-oligosaccharides.. Its pathway is glycan degradation; xylan degradation. With respect to regulation, inhibited by phenylmethylsulfonyl flouride. Its function is as follows. Degrades acetylated xylans by cleaving acetyl side groups from the hetero-xylan backbone. The sequence is that of Acetylxylan esterase (axe1) from Hypocrea jecorina (Trichoderma reesei).